The primary structure comprises 153 residues: uncharacterized protein (153 aa).

The disordered stretch occupies residues glutamate 19–arginine 46.

This is an uncharacterized protein from Homo sapiens (Human).